The primary structure comprises 729 residues: MFVEHNLIKNIKIFTLAFTLTVVLIQLSRFISPLAIIHSSYIFLAWMPLCVMLSILFIFGWRGVVPVLCGMFCTNLWNFHLSFLQTAVMLGSQTFVVLCACAILRWQLGTRWRYGLTSRYVWQRLFWLGLVTPIGIKCSMYLVGSFFDFPLKISTFFGDADAIFTVVDLLSLFTAVLIYNMLFYYLTRMIVSPHFAQILWRRDIAPSLGKEKRAFTLSWLAALSVLLLLLCTPYENDFIAGYLVPVFFIIFTLGVGKLRYPFLNLTWAVSTLCLLNYNQNFLQGVETEYSLAFILAVLISFSVCLLYMVRIYHRSEWLNRRWHLQALTDPLTLLPNFRALEQAPEQEAGKSFCCLRIDNLEFMSRHYGLMMRVHCIRSICRTLLPLMQENEKLYQLPGSELLLVLSGPETEGRLQHMVNILNSRQIHWNNTGLDMGYGAAWGRFDGNQETLQPLLGQLSWLAEQSCAHHHVLALDSREEMVSGQTTKQVLLLNTIRTALDQGDLLLYAQPIRNKEGEGYDEILARLKYDGGIMTPDKFLPLIAQFNLSARFDLQVLESLLKWLATHPCDKKGPRFSVNLMPLTLLQKNIAGRIIRLFKRYHISPQAVILEITEEQAFSNAESSMYNIEQLHKFGFRIAIDDFGTGYANYERLKRLQADIIKIDGVFVKDIVTNTLDAMIVRSITDLAKAKSLSVVAEFVETQQQQALLHKLGVQYLQGYLIGRPQPLAD.

Transmembrane regions (helical) follow at residues 17–37 (AFTL…LAII), 41–61 (YIFL…IFGW), 83–103 (FLQT…ACAI), 126–146 (FWLG…VGSF), 163–183 (IFTV…NMLF), 214–234 (AFTL…CTPY), 238–258 (FIAG…VGKL), and 289–309 (YSLA…LYMV). A GGDEF domain is found at 348–476 (AGKSFCCLRI…AHHHVLALDS (129 aa)). The 242-residue stretch at 488-729 (QVLLLNTIRT…LIGRPQPLAD (242 aa)) folds into the EAL domain.

It localises to the cell membrane. It catalyses the reaction 3',3'-c-di-GMP + H2O = 5'-phosphoguanylyl(3'-&gt;5')guanosine + H(+). Phosphodiesterase (PDE) that catalyzes the hydrolysis of cyclic-di-GMP (c-di-GMP) to 5'-pGpG. This chain is Probable cyclic di-GMP phosphodiesterase PdeA, found in Escherichia coli (strain K12).